Here is a 102-residue protein sequence, read N- to C-terminus: Small ribosomal subunit protein uS10 (102 aa).

The tract at residues 34-59 (QMSGPIPLPTKRLLVPTRKSPDGEGK) is disordered.

The protein belongs to the universal ribosomal protein uS10 family. In terms of assembly, part of the 30S ribosomal subunit.

Involved in the binding of tRNA to the ribosomes. This Methanopyrus kandleri (strain AV19 / DSM 6324 / JCM 9639 / NBRC 100938) protein is Small ribosomal subunit protein uS10.